A 336-amino-acid polypeptide reads, in one-letter code: Palmitoyltransferase PFA3 (336 aa).

The Cytoplasmic segment spans residues 1 to 6; it reads MNDRLS. Residues 7 to 29 form a helical membrane-spanning segment; sequence LTSLFPRCLTTCLYIWTAYITLT. Residues 30–37 are Vacuolar-facing; it reads RIHQIPRW. The helical transmembrane segment at 38-58 threads the bilayer; sequence FLALTIVPTLAVALYTYYKVI. Residues 59-147 are Cytoplasmic-facing; it reads ARGPGSPLDF…AECTGFRNQK (89 aa). One can recognise a DHHC domain in the interval 104–154; the sequence is RVCQVCHVWKPDRCHHCSSCDVCILKMDHHCPWFAECTGFRNQKFFIQFLM. A helical transmembrane segment spans residues 148 to 168; it reads FFIQFLMYTTLYAFLVLIYTC. The Vacuolar portion of the chain corresponds to 169–188; it reads YELGTWFNSGSFNRELIDFH. Residues 189–209 form a helical membrane-spanning segment; that stretch reads LLGVALLAVAVFISVLAFTCF. Residues 210–336 lie on the Cytoplasmic side of the membrane; the sequence is SIYQVCKNQT…RASVEIIDAN (127 aa).

It belongs to the DHHC palmitoyltransferase family. PFA3 subfamily. Autopalmitoylated.

It localises to the vacuole membrane. It catalyses the reaction L-cysteinyl-[protein] + hexadecanoyl-CoA = S-hexadecanoyl-L-cysteinyl-[protein] + CoA. Palmitoyltransferase specific for VAC8. Palmitoylates VAC8 at one or more of its N-terminal cysteine residues, which is required for its proper membrane localization. The sequence is that of Palmitoyltransferase PFA3 (PFA3) from Saccharomyces cerevisiae (strain ATCC 204508 / S288c) (Baker's yeast).